A 165-amino-acid polypeptide reads, in one-letter code: uncharacterized protein (165 aa).

Residues 16-36 (ASISSILNFFFFYIMEYFVAV) form a helical membrane-spanning segment.

It belongs to the asfivirus F165R family.

The protein localises to the host membrane. This is an uncharacterized protein from Ornithodoros (relapsing fever ticks).